Consider the following 195-residue polypeptide: Peptidyl-tRNA hydrolase (195 aa).

Tyr-17 lines the tRNA pocket. Residue His-22 is the Proton acceptor of the active site. TRNA contacts are provided by Tyr-68, Asn-70, and Asn-116.

This sequence belongs to the PTH family. As to quaternary structure, monomer.

It is found in the cytoplasm. It catalyses the reaction an N-acyl-L-alpha-aminoacyl-tRNA + H2O = an N-acyl-L-amino acid + a tRNA + H(+). Functionally, hydrolyzes ribosome-free peptidyl-tRNAs (with 1 or more amino acids incorporated), which drop off the ribosome during protein synthesis, or as a result of ribosome stalling. Catalyzes the release of premature peptidyl moieties from peptidyl-tRNA molecules trapped in stalled 50S ribosomal subunits, and thus maintains levels of free tRNAs and 50S ribosomes. This Shewanella oneidensis (strain ATCC 700550 / JCM 31522 / CIP 106686 / LMG 19005 / NCIMB 14063 / MR-1) protein is Peptidyl-tRNA hydrolase.